A 198-amino-acid polypeptide reads, in one-letter code: MAENDDAVLTAAVGYVYVGAAGTAAPTPALLKTIDLSKPETWTGATGWTSVGHTSRGTLPEFGFEGGESEVKGSWQKKKLREITTEDPIDYVTVLLHQFDEQSLGLYYGPNASETPGVFGVKTGQTNEKAVLVVIEDGDMRLGHHAHKAGVRRDDAIELPIDDLAALPVRFTYLDHEDELPFSWINEDLFNVPEVPEG.

Its subcellular location is the virion. The polypeptide is Major tail protein Gp23 (23) (Mycobacterium phage L5 (Mycobacteriophage L5)).